We begin with the raw amino-acid sequence, 261 residues long: Bidirectional sugar transporter SWEET1b (261 aa).

At 1–6 (MEDLAK) the chain is on the extracellular side. The chain crosses the membrane as a helical span at residues 7-27 (FLFGVSGNVIALFLFLSPVPT). The region spanning 7–95 (FLFGVSGNVI…VVFLVFASTH (89 aa)) is the MtN3/slv 1 domain. Residues 28–42 (FWRIIRRKSTEDFSG) lie on the Cytoplasmic side of the membrane. A helical transmembrane segment spans residues 43–63 (VPYNMTLINCLLSAWYGLPFV). The Extracellular segment spans residues 64–71 (SPNNILVS). Residues 72–92 (TINGAGAVIETAYVVVFLVFA) traverse the membrane as a helical segment. The Cytoplasmic portion of the chain corresponds to 93–101 (STHKTRLRT). The chain crosses the membrane as a helical span at residues 102 to 122 (LGLAAAVASVFAAVALVSLLA). At 123–129 (LHGQHRK) the chain is on the extracellular side. Residues 130-150 (LLCGVAATVCSICMYASPLSI) form a helical membrane-spanning segment. Residues 133–215 (GVAATVCSIC…VLYAIYRNNK (83 aa)) form the MtN3/slv 2 domain. Residues 151 to 164 (MRLVIKTKSVEYMP) are Cytoplasmic-facing. Residues 165-185 (FLMSLAVFLCGTSWFIYGLLG) form a helical membrane-spanning segment. Residues 186–189 (RDPF) are Extracellular-facing. A helical transmembrane segment spans residues 190–210 (VTIPNGCGSFLGAVQLVLYAI). At 211 to 261 (YRNNKGAGGGSGGKQAGDDDVEMAEGRNNKVADGGAADDDSTAGGKAGTEV) the chain is on the cytoplasmic side. Residues 218–261 (GGGSGGKQAGDDDVEMAEGRNNKVADGGAADDDSTAGGKAGTEV) form a disordered region.

Belongs to the SWEET sugar transporter family. In terms of assembly, forms homodimers. Highly expressed in leaves. Expressed at very low levels in roots, stems and panicles.

The protein localises to the cell membrane. It carries out the reaction D-glucose(out) = D-glucose(in). The enzyme catalyses D-galactose(in) = D-galactose(out). In terms of biological role, mediates transport of sugars across the plasma membrane. Can transport glucose and galactose, but not fructose, mannose and sucrose. In Oryza sativa subsp. japonica (Rice), this protein is Bidirectional sugar transporter SWEET1b (SWEET1B).